A 318-amino-acid chain; its full sequence is L-lactate dehydrogenase 1 (318 aa).

NAD(+)-binding positions include valine 17, aspartate 38, lysine 43, tyrosine 69, and 83 to 84 (GA). Substrate-binding positions include glutamine 86, arginine 92, and 124 to 127 (NPVD). Residues 122–124 (ATN) and serine 147 contribute to the NAD(+) site. Residue 152–155 (DTGR) participates in substrate binding. Positions 157 and 172 each coordinate beta-D-fructose 1,6-bisphosphate. Catalysis depends on histidine 179, which acts as the Proton acceptor. Position 224 is a phosphotyrosine (tyrosine 224). Threonine 233 provides a ligand contact to substrate.

It belongs to the LDH/MDH superfamily. LDH family. In terms of assembly, homotetramer.

It localises to the cytoplasm. The catalysed reaction is (S)-lactate + NAD(+) = pyruvate + NADH + H(+). It functions in the pathway fermentation; pyruvate fermentation to lactate; (S)-lactate from pyruvate: step 1/1. Its activity is regulated as follows. Allosterically activated by fructose 1,6-bisphosphate (FBP). Its function is as follows. Catalyzes the conversion of lactate to pyruvate. The sequence is that of L-lactate dehydrogenase 1 from Peribacillus psychrosaccharolyticus (Bacillus psychrosaccharolyticus).